Here is a 341-residue protein sequence, read N- to C-terminus: 2-keto-4-carboxy-3-hexenedioate hydratase (341 aa).

Zn(2+) is bound by residues His8 and His10. 71 to 73 is a binding site for substrate; the sequence is RAS. Residue His178 coordinates Zn(2+). The substrate site is built by Tyr194 and His223. Glu284 acts as the Proton donor/acceptor in catalysis. A substrate-binding site is contributed by Arg290.

This sequence belongs to the metallo-dependent hydrolases superfamily. As to quaternary structure, homodimer. Requires Zn(2+) as cofactor.

It carries out the reaction (3Z)-2-oxo-4-carboxy-3-hexenedioate + H2O = (2S)-2-hydroxy-4-oxobutane-1,2,4-tricarboxylate. It participates in secondary metabolite metabolism; lignin degradation. Contributes to the degradation of lignin at the level of the protocatechuate 4,5-cleavage pathway. Catalyzes the hydration of the double bond of (3Z)-2-keto-4-carboxy-3-hexenedioate (KCH) to (4S)-4-carboxy-4-hydroxy-2-oxoadipate (CHA, also named (2S)-2-hydroxy-4-oxobutane-1,2,4-tricarboxylate). Is involved in the catabolism of both vanillate and syringate. This chain is 2-keto-4-carboxy-3-hexenedioate hydratase, found in Sphingobium sp. (strain NBRC 103272 / SYK-6).